A 325-amino-acid polypeptide reads, in one-letter code: NADH-quinone oxidoreductase subunit H (325 aa).

The next 8 helical transmembrane spans lie at 11-31 (ILLTILKAVVILLVVVTCGAF), 81-101 (VIFTLAPMIAFTSLLLAFAIV), 114-134 (IGILFFLMMAGLAVYAVLFAG), 154-174 (LSYEVFLGLSLMGVVAQAGSF), 186-206 (VWNVIPQFFGFITFAIAGVAV), 237-257 (FFVGEYIGIVTISALMVTLFF), 265-285 (LPPFIWFALKTAFFMMMFILI), and 304-324 (ICLPLTLINLLVTAAVILWQA).

This sequence belongs to the complex I subunit 1 family. NDH-1 is composed of 13 different subunits. Subunits NuoA, H, J, K, L, M, N constitute the membrane sector of the complex.

Its subcellular location is the cell inner membrane. It catalyses the reaction a quinone + NADH + 5 H(+)(in) = a quinol + NAD(+) + 4 H(+)(out). Functionally, NDH-1 shuttles electrons from NADH, via FMN and iron-sulfur (Fe-S) centers, to quinones in the respiratory chain. The immediate electron acceptor for the enzyme in this species is believed to be ubiquinone. Couples the redox reaction to proton translocation (for every two electrons transferred, four hydrogen ions are translocated across the cytoplasmic membrane), and thus conserves the redox energy in a proton gradient. This subunit may bind ubiquinone. In Escherichia fergusonii (strain ATCC 35469 / DSM 13698 / CCUG 18766 / IAM 14443 / JCM 21226 / LMG 7866 / NBRC 102419 / NCTC 12128 / CDC 0568-73), this protein is NADH-quinone oxidoreductase subunit H.